The sequence spans 278 residues: Large ribosomal subunit protein uL2 (278 aa).

The segment at Arg-222–Arg-264 is disordered.

Belongs to the universal ribosomal protein uL2 family. Part of the 50S ribosomal subunit. Forms a bridge to the 30S subunit in the 70S ribosome.

Functionally, one of the primary rRNA binding proteins. Required for association of the 30S and 50S subunits to form the 70S ribosome, for tRNA binding and peptide bond formation. It has been suggested to have peptidyltransferase activity; this is somewhat controversial. Makes several contacts with the 16S rRNA in the 70S ribosome. The protein is Large ribosomal subunit protein uL2 of Methylobacterium radiotolerans (strain ATCC 27329 / DSM 1819 / JCM 2831 / NBRC 15690 / NCIMB 10815 / 0-1).